Reading from the N-terminus, the 644-residue chain is Exoribonuclease 2 (644 aa).

Residues 189–516 form the RNB domain; the sequence is REDLTALNFV…NHRLLKAMIT (328 aa). Residues 561–643 enclose the S1 motif domain; it reads DTRFTAEIID…ETRNVIARPV (83 aa).

This sequence belongs to the RNR ribonuclease family. RNase II subfamily.

The protein resides in the cytoplasm. It carries out the reaction Exonucleolytic cleavage in the 3'- to 5'-direction to yield nucleoside 5'-phosphates.. Involved in mRNA degradation. Hydrolyzes single-stranded polyribonucleotides processively in the 3' to 5' direction. The sequence is that of Exoribonuclease 2 from Yersinia pseudotuberculosis serotype IB (strain PB1/+).